The sequence spans 91 residues: uncharacterized protein (91 aa).

The chain crosses the membrane as a helical span at residues isoleucine 7–glutamine 23.

Its subcellular location is the membrane. This is an uncharacterized protein from Haemophilus influenzae (strain ATCC 51907 / DSM 11121 / KW20 / Rd).